We begin with the raw amino-acid sequence, 26 residues long: DAAEPWQLGFQDAATPIMQGIIDLHH.

The protein belongs to the cytochrome c oxidase subunit 2 family. In terms of assembly, component of the cytochrome c oxidase (complex IV, CIV), a multisubunit enzyme composed of a catalytic core of 3 subunits and several supernumerary subunits. The complex exists as a monomer or a dimer and forms supercomplexes (SCs) in the inner mitochondrial membrane with ubiquinol-cytochrome c oxidoreductase (cytochrome b-c1 complex, complex III, CIII). Requires Cu cation as cofactor.

It is found in the mitochondrion inner membrane. The enzyme catalyses 4 Fe(II)-[cytochrome c] + O2 + 8 H(+)(in) = 4 Fe(III)-[cytochrome c] + 2 H2O + 4 H(+)(out). Its function is as follows. Component of the cytochrome c oxidase, the last enzyme in the mitochondrial electron transport chain which drives oxidative phosphorylation. The respiratory chain contains 3 multisubunit complexes succinate dehydrogenase (complex II, CII), ubiquinol-cytochrome c oxidoreductase (cytochrome b-c1 complex, complex III, CIII) and cytochrome c oxidase (complex IV, CIV), that cooperate to transfer electrons derived from NADH and succinate to molecular oxygen, creating an electrochemical gradient over the inner membrane that drives transmembrane transport and the ATP synthase. Cytochrome c oxidase is the component of the respiratory chain that catalyzes the reduction of oxygen to water. Electrons originating from reduced cytochrome c in the intermembrane space (IMS) are transferred via the dinuclear copper A center (CU(A)) of subunit 2 and heme A of subunit 1 to the active site in subunit 1, a binuclear center (BNC) formed by heme A3 and copper B (CU(B)). The BNC reduces molecular oxygen to 2 water molecules using 4 electrons from cytochrome c in the IMS and 4 protons from the mitochondrial matrix. This Solanum tuberosum (Potato) protein is Cytochrome c oxidase subunit 2 (COX2).